Here is a 36-residue protein sequence, read N- to C-terminus: Glucagon (36 aa).

The protein belongs to the glucagon family. Produced by the X-cells of the islets of pancreas.

It localises to the secreted. Functionally, promotes hydrolysis of glycogen and lipids, and raises the blood sugar level. In Hydrolagus colliei (Spotted ratfish), this protein is Glucagon (gcg).